The chain runs to 84 residues: Exodeoxyribonuclease 7 small subunit (84 aa).

The segment at 65 to 84 (QEGDWTTSPFEPASGEPPGG) is disordered.

This sequence belongs to the XseB family. As to quaternary structure, heterooligomer composed of large and small subunits.

It is found in the cytoplasm. It catalyses the reaction Exonucleolytic cleavage in either 5'- to 3'- or 3'- to 5'-direction to yield nucleoside 5'-phosphates.. Its function is as follows. Bidirectionally degrades single-stranded DNA into large acid-insoluble oligonucleotides, which are then degraded further into small acid-soluble oligonucleotides. This Syntrophobacter fumaroxidans (strain DSM 10017 / MPOB) protein is Exodeoxyribonuclease 7 small subunit.